The sequence spans 740 residues: UvrABC system protein B (740 aa).

The segment at 1–36 (MTIAIRTTLDEPENHSDFVPHRPSRPEKTEPSKPFR) is disordered. Positions 8–33 (TLDEPENHSDFVPHRPSRPEKTEPSK) are enriched in basic and acidic residues. In terms of domain architecture, Helicase ATP-binding spans 56–444 (KDIQKGERDQ…GGVFVEQIIR (389 aa)). 69 to 76 (GVTGSGKT) is a binding site for ATP. The Beta-hairpin signature appears at 122–145 (YYDYYQPEAYVPRTDTYIEKDSAI). In terms of domain architecture, Helicase C-terminal spans 461–627 (QVDNLIFEAK…TVKRQVDDIV (167 aa)). The UVR domain occupies 651-686 (ARSISETEKEMLEAAANLEFEKAAQLRDVLHQLKRQ). The disordered stretch occupies residues 687–740 (ELGLPPEKSSEIQGRSEAGRPGTRKTRSDKAREAKASKRVKQEAGEKLLRSRGH). The span at 712–740 (TRSDKAREAKASKRVKQEAGEKLLRSRGH) shows a compositional bias: basic and acidic residues.

The protein belongs to the UvrB family. As to quaternary structure, forms a heterotetramer with UvrA during the search for lesions. Interacts with UvrC in an incision complex.

The protein localises to the cytoplasm. Functionally, the UvrABC repair system catalyzes the recognition and processing of DNA lesions. A damage recognition complex composed of 2 UvrA and 2 UvrB subunits scans DNA for abnormalities. Upon binding of the UvrA(2)B(2) complex to a putative damaged site, the DNA wraps around one UvrB monomer. DNA wrap is dependent on ATP binding by UvrB and probably causes local melting of the DNA helix, facilitating insertion of UvrB beta-hairpin between the DNA strands. Then UvrB probes one DNA strand for the presence of a lesion. If a lesion is found the UvrA subunits dissociate and the UvrB-DNA preincision complex is formed. This complex is subsequently bound by UvrC and the second UvrB is released. If no lesion is found, the DNA wraps around the other UvrB subunit that will check the other stand for damage. The sequence is that of UvrABC system protein B from Zymomonas mobilis subsp. mobilis (strain ATCC 31821 / ZM4 / CP4).